Reading from the N-terminus, the 3994-residue chain is Hybrid PKS-NRPs synthetase opdA (3994 aa).

Residues 6–442 (PEPIAIVGSS…GTNSHVILES (437 aa)) form the Ketosynthase family 3 (KS3) domain. Catalysis depends on for beta-ketoacyl synthase activity residues cysteine 179, histidine 316, and histidine 362. The segment at 559–881 (VFTGQGAQWP…LKRDSNDVEA (323 aa)) is malonyl-CoA:ACP transacylase (MAT) domain. The tract at residues 951 to 1085 (HELLGRRTHD…GRLIIHLGET (135 aa)) is N-terminal hotdog fold. The segment at 951-1251 (HELLGRRTHD…SVKPMAPPTA (301 aa)) is dehydratase (DH) domain. The PKS/mFAS DH domain maps to 951–1252 (HELLGRRTHD…VKPMAPPTAE (302 aa)). Histidine 983 acts as the Proton acceptor; for dehydratase activity in catalysis. Residues 1100-1252 (LLSVDTDEGY…VKPMAPPTAE (153 aa)) form a C-terminal hotdog fold region. The active-site Proton donor; for dehydratase activity is the aspartate 1159. A methyltransferase (MT) domain region spans residues 1292 to 1593 (DRVVLYYVQR…VDLAFHDLPD (302 aa)). The segment at 2123 to 2297 (TYLMVGMAGG…ASIIHIGFVT (175 aa)) is ketoreductase (KR) domain. A Carrier 1 domain is found at 2406–2483 (EAVEITQKAF…QICTNAAKQL (78 aa)). Residue serine 2443 is modified to O-(pantetheine 4'-phosphoryl)serine. Residues 2486-2575 (QKGGQEPSEQ…FDPDDRDYNP (90 aa)) are disordered. 2 stretches are compositionally biased toward polar residues: residues 2505 to 2514 (LHVSQGSLHT) and 2522 to 2546 (TETS…SVTD). Basic and acidic residues predominate over residues 2547–2556 (TVEKRDKGDI). Residues 2557–2570 (SVDEGPNEQFDPDD) show a composition bias toward acidic residues. A condensation (C) domain region spans residues 2582–3007 (RLSSGQSRIY…SNTYMTVAKI (426 aa)). Residues 3043 to 3436 (HETNREDLAI…DGSLVFLGRL (394 aa)) are adenylation (A) (KR) domain. Residues 3553 to 3630 (PKLSLRQSEL…KMTMLVDLER (78 aa)) enclose the Carrier 2 domain. Serine 3590 bears the O-(pantetheine 4'-phosphoryl)serine mark. The interval 3679–3895 (TGATGFLGGS…FDFKKVEEVA (217 aa)) is reductase (RED) domain.

This sequence in the C-terminal section; belongs to the NRP synthetase family. Requires pantetheine 4'-phosphate as cofactor.

It functions in the pathway secondary metabolite biosynthesis. Functionally, hybrid PKS-NRPS synthetase; part of the gene cluster that mediates the biosynthesis of oxopyrrolidines, polyketide-amino acid hybrid compounds with feature structures of tetramic acid. The polyketide chain is first assembled by the highly reducing PKS module of opdA using acetyl-CoA as the starter unit and five malonyl-CoA as the extender units. OpdC acts as trans-acting enoyl reductase and reduces the terminal alkenyl to alkane. The 17R in oxopyrrolidine A and 15R, 17S in oxopyrrolidine B are generated by non-stereospecific catalysis of the ketoreductase (KR) domain and enoyl reductases. Then the polyketides with specific configurations are transferred to the NRPS module of opdA and linked to L-tyrosine to form an amide bond. Finally, the oxopyrrolidines are offloaded through a Dieckmann cyclization catalyzed by the terminal D domain to give a tetramic acid moiety. The protein is Hybrid PKS-NRPs synthetase opdA of Penicillium oxalicum (strain 114-2 / CGMCC 5302) (Penicillium decumbens).